The sequence spans 433 residues: Pyrimidine-nucleoside phosphorylase (433 aa).

Phosphate is bound at residue 81-83; the sequence is KHS. Residues G88 and T90 each coordinate K(+). Phosphate-binding positions include T92, 108–110, and T120; that span reads KMS. Substrate contacts are provided by R168 and K187. Residues L243, A246, and E255 each coordinate K(+).

It belongs to the thymidine/pyrimidine-nucleoside phosphorylase family. In terms of assembly, homodimer. The cofactor is K(+).

It carries out the reaction uridine + phosphate = alpha-D-ribose 1-phosphate + uracil. The catalysed reaction is thymidine + phosphate = 2-deoxy-alpha-D-ribose 1-phosphate + thymine. The enzyme catalyses 2'-deoxyuridine + phosphate = 2-deoxy-alpha-D-ribose 1-phosphate + uracil. Functionally, catalyzes phosphorolysis of the pyrimidine nucleosides uridine, thymidine and 2'-deoxyuridine with the formation of the corresponding pyrimidine base and ribose-1-phosphate. This is Pyrimidine-nucleoside phosphorylase from Bacillus subtilis (strain 168).